The chain runs to 197 residues: Phosphoheptose isomerase (197 aa).

One can recognise an SIS domain in the interval 34 to 196 (MVHCLLGGNK…DRTLFPQDEQ (163 aa)). 49-51 (NGG) is a substrate binding site. His-58 and Glu-62 together coordinate Zn(2+). Substrate is bound by residues Glu-62, 91 to 92 (ND), 117 to 119 (STS), Ser-122, and Gln-172. Zn(2+) is bound by residues Gln-172 and His-180.

It belongs to the SIS family. GmhA subfamily. Homotetramer. It depends on Zn(2+) as a cofactor.

It is found in the cytoplasm. It carries out the reaction 2 D-sedoheptulose 7-phosphate = D-glycero-alpha-D-manno-heptose 7-phosphate + D-glycero-beta-D-manno-heptose 7-phosphate. It participates in carbohydrate biosynthesis; D-glycero-D-manno-heptose 7-phosphate biosynthesis; D-glycero-alpha-D-manno-heptose 7-phosphate and D-glycero-beta-D-manno-heptose 7-phosphate from sedoheptulose 7-phosphate: step 1/1. In terms of biological role, catalyzes the isomerization of sedoheptulose 7-phosphate in D-glycero-D-manno-heptose 7-phosphate. This is Phosphoheptose isomerase from Shewanella sediminis (strain HAW-EB3).